An 837-amino-acid polypeptide reads, in one-letter code: Ubiquitin carboxyl-terminal hydrolase A (837 aa).

The UBP-type; degenerate zinc finger occupies 166-277; it reads PSAFAESIIQ…QHLTHWGLNP (112 aa). A USP domain is found at 319-835; it reads TGIENLGNSC…LGYIYFYKRQ (517 aa). Cys328 acts as the Nucleophile in catalysis. Residues 628–669 enclose the UBA 1 domain; that stretch reads SFNQEVLDTLLSMDFPLVRCKKALLATGGKDAELAMNWIFEH. The segment at 676 to 695 is disordered; the sequence is DIEQTPVNNNNNNNNSSNSN. The span at 683-695 shows a compositional bias: low complexity; that stretch reads NNNNNNNNSSNSN. In terms of domain architecture, UBA 2 spans 700-740; that stretch reads VFNSQDVDNIIGMGFTDSQAKLALKNTKGNLERAADWLFSH. His797 functions as the Proton acceptor in the catalytic mechanism.

Belongs to the peptidase C19 family.

The catalysed reaction is Thiol-dependent hydrolysis of ester, thioester, amide, peptide and isopeptide bonds formed by the C-terminal Gly of ubiquitin (a 76-residue protein attached to proteins as an intracellular targeting signal).. Its function is as follows. Required for development but not growth. In Dictyostelium discoideum (Social amoeba), this protein is Ubiquitin carboxyl-terminal hydrolase A (ubpA).